Reading from the N-terminus, the 490-residue chain is B3 domain-containing protein LOC_Os12g40080 (490 aa).

The segment at residues 24 to 117 (GKSFIKVMIT…HFKVWIYDPS (94 aa)) is a DNA-binding region (TF-B3 1). The segment at 161 to 191 (SGHSKETSEINPANSPSWKPTERVPSSEELD) is disordered. The segment covering 169–178 (EINPANSPSW) has biased composition (polar residues). 2 DNA-binding regions (TF-B3) span residues 236–331 (FYIT…FHPL) and 389–487 (VAVM…IRKS).

It localises to the nucleus. The sequence is that of B3 domain-containing protein LOC_Os12g40080 from Oryza sativa subsp. japonica (Rice).